The primary structure comprises 63 residues: Large ribosomal subunit protein bL28 (63 aa).

The protein belongs to the bacterial ribosomal protein bL28 family.

The protein is Large ribosomal subunit protein bL28 of Geobacter metallireducens (strain ATCC 53774 / DSM 7210 / GS-15).